The sequence spans 1018 residues: D-2-hydroxyglutarate dehydrogenase (1018 aa).

One can recognise an FAD-binding PCMH-type domain in the interval Y48–L281. Residues R402 and H500 each coordinate (R)-2-hydroxyglutarate. One can recognise a 4Fe-4S ferredoxin-type domain in the interval F662–R695. [4Fe-4S] cluster is bound by residues C673, C676, C679, and C683.

In the N-terminal section; belongs to the FAD-binding oxidoreductase/transferase type 4 family. In terms of assembly, homotetramer. The cofactor is [4Fe-4S] cluster. FAD serves as cofactor.

The enzyme catalyses (R)-2-hydroxyglutarate + A = 2-oxoglutarate + AH2. With respect to regulation, activity is completely inhibited by the addition of 0.5 mM Mn(2+), Ni(2+), or Co(2+) and partially inhibited by 0.5 mM Zn(2+). Its function is as follows. Catalyzes the oxidation of D-2-hydroxyglutarate (D-2-HGA) to 2-oxoglutarate. Appears to be the only D2HGDH in E.coli, providing the way to recycle D-2-HGA produced during L-serine synthesis by SerA, by converting it back to 2-oxoglutarate. The physiological molecule that functions as the primary electron acceptor during D-2-HGA oxidation by YdiJ in E.coli is unknown. Shows strict substrate specificity towards D-2-HGA, since it has no detectable activity on L-2-hydroxyglutarate, L-malate, D-malate, L-lactate, D-lactate, L-tartrate, D-tartrate, L-glycerate, D-glycerate, glutarate, or pyruvate. The polypeptide is D-2-hydroxyglutarate dehydrogenase (ydiJ) (Escherichia coli (strain K12)).